The sequence spans 230 residues: Large ribosomal subunit protein uL1 (230 aa).

Belongs to the universal ribosomal protein uL1 family. In terms of assembly, part of the 50S ribosomal subunit.

Its function is as follows. Binds directly to 23S rRNA. The L1 stalk is quite mobile in the ribosome, and is involved in E site tRNA release. Protein L1 is also a translational repressor protein, it controls the translation of the L11 operon by binding to its mRNA. This Acholeplasma laidlawii (strain PG-8A) protein is Large ribosomal subunit protein uL1.